The chain runs to 315 residues: Acetaldehyde dehydrogenase (315 aa).

NAD(+) is bound at residue 13–16 (SGNI). Catalysis depends on cysteine 131, which acts as the Acyl-thioester intermediate. NAD(+) contacts are provided by residues 163 to 171 (SAGPGTRAN) and asparagine 290.

The protein belongs to the acetaldehyde dehydrogenase family.

The catalysed reaction is acetaldehyde + NAD(+) + CoA = acetyl-CoA + NADH + H(+). The protein is Acetaldehyde dehydrogenase of Xanthobacter autotrophicus (strain ATCC BAA-1158 / Py2).